The chain runs to 422 residues: Gamma-glutamyl phosphate reductase (422 aa).

Belongs to the gamma-glutamyl phosphate reductase family.

It is found in the cytoplasm. The catalysed reaction is L-glutamate 5-semialdehyde + phosphate + NADP(+) = L-glutamyl 5-phosphate + NADPH + H(+). It participates in amino-acid biosynthesis; L-proline biosynthesis; L-glutamate 5-semialdehyde from L-glutamate: step 2/2. Catalyzes the NADPH-dependent reduction of L-glutamate 5-phosphate into L-glutamate 5-semialdehyde and phosphate. The product spontaneously undergoes cyclization to form 1-pyrroline-5-carboxylate. The sequence is that of Gamma-glutamyl phosphate reductase from Chlorobium phaeovibrioides (strain DSM 265 / 1930) (Prosthecochloris vibrioformis (strain DSM 265)).